The sequence spans 310 residues: Transcriptional regulator NRG1 (310 aa).

Positions 85 to 131 (YYMGPPAQHRLPTPPPYPMSSPTTATAATPLSQQSPHLQPQQTLQQP) are disordered. The span at 104–131 (SSPTTATAATPLSQQSPHLQPQQTLQQP) shows a compositional bias: low complexity. 2 consecutive C2H2-type zinc fingers follow at residues 228–250 (HVCK…NRIH) and 256–280 (HQCP…YKTH).

The protein resides in the nucleus. In terms of biological role, transcriptional repressor that binds NRG1 response elements (NRE) of target promoters. Involved in regulation of chlamydospore formation, hyphal growth, virulence, and stress response. Plays a key role in regulating true hyphal growth, but does not regulate pseudohyphal growth in the same fashion. Directs transcriptional repression of a subset of filament-specific genes such as HWP1, HYR1, ALS8, HWP1, or ECE1; via the TUP1 pathway. Functions with UME6 in a negative feedback loop to control the level and duration of filament-specific gene expression in response to inducing conditions. Plays a key role in biofilm formation and dispersion. Also plays the role of a negative regulator of virulence in mice models. Required for the expression of the cell wall genes RBR1. This is Transcriptional regulator NRG1 (NRG1) from Candida albicans (strain SC5314 / ATCC MYA-2876) (Yeast).